The primary structure comprises 300 residues: Probable amino-acid ABC transporter periplasmic-binding protein y4tE (300 aa).

A signal peptide spans 1–27 (MTHLKISKTAPAVARFLPAGRIASVAA).

It belongs to the bacterial solute-binding protein 3 family.

The protein resides in the periplasm. Its function is as follows. Probably part of the binding-protein-dependent transport system y4tEFGH for an amino acid. The chain is Probable amino-acid ABC transporter periplasmic-binding protein y4tE from Sinorhizobium fredii (strain NBRC 101917 / NGR234).